A 397-amino-acid chain; its full sequence is Digeranylgeranylglycerophospholipid reductase (397 aa).

FAD is bound by residues Ala-15, Glu-34, Cys-45, Gly-46, Gly-48, Arg-101, Ala-125, Glu-163, Asp-284, Gly-296, and Ile-297. Lys-339 and Val-375 together coordinate a 2,3-bis-O-(geranylgeranyl)-sn-glycerol 1-phospholipid.

Belongs to the geranylgeranyl reductase family. DGGGPL reductase subfamily. It depends on FAD as a cofactor.

It carries out the reaction 2,3-bis-O-(phytanyl)-sn-glycerol 1-phosphate + 8 NADP(+) = 2,3-bis-O-(geranylgeranyl)-sn-glycerol 1-phosphate + 8 NADPH + 8 H(+). The enzyme catalyses 2,3-bis-O-(phytanyl)-sn-glycerol 1-phosphate + 8 NAD(+) = 2,3-bis-O-(geranylgeranyl)-sn-glycerol 1-phosphate + 8 NADH + 8 H(+). The catalysed reaction is a 2,3-bis-O-phytanyl-sn-glycerol 1-phospholipid + 8 A = a 2,3-bis-O-(geranylgeranyl)-sn-glycerol 1-phospholipid + 8 AH2. It catalyses the reaction CDP-2,3-bis-O-(geranylgeranyl)-sn-glycerol + 8 AH2 = CDP-2,3-bis-O-(phytanyl)-sn-glycerol + 8 A. It carries out the reaction archaetidylserine + 8 AH2 = 2,3-bis-O-phytanyl-sn-glycero-3-phospho-L-serine + 8 A. The protein operates within membrane lipid metabolism; glycerophospholipid metabolism. Functionally, is involved in the reduction of 2,3-digeranylgeranylglycerophospholipids (unsaturated archaeols) into 2,3-diphytanylglycerophospholipids (saturated archaeols) in the biosynthesis of archaeal membrane lipids. Catalyzes the formation of archaetidic acid (2,3-di-O-phytanyl-sn-glyceryl phosphate) from 2,3-di-O-geranylgeranylglyceryl phosphate (DGGGP) via the hydrogenation of each double bond of the isoprenoid chains. Is also probably able to reduce double bonds of geranyl groups in CDP-2,3-bis-O-(geranylgeranyl)-sn-glycerol and archaetidylserine, thus acting at various stages in the biosynthesis of archaeal membrane lipids. The polypeptide is Digeranylgeranylglycerophospholipid reductase (Picrophilus torridus (strain ATCC 700027 / DSM 9790 / JCM 10055 / NBRC 100828 / KAW 2/3)).